A 424-amino-acid polypeptide reads, in one-letter code: Protein-glutamate methylesterase/protein-glutamine glutaminase (424 aa).

The Response regulatory domain maps to arginine 6–threonine 123. A 4-aspartylphosphate modification is found at aspartate 57. The disordered stretch occupies residues serine 177 to glycine 210. In terms of domain architecture, CheB-type methylesterase spans arginine 229–alanine 423. Active-site residues include serine 241, histidine 268, and aspartate 365.

It belongs to the CheB family. In terms of processing, phosphorylated by CheA. Phosphorylation of the N-terminal regulatory domain activates the methylesterase activity.

It is found in the cytoplasm. It carries out the reaction [protein]-L-glutamate 5-O-methyl ester + H2O = L-glutamyl-[protein] + methanol + H(+). The catalysed reaction is L-glutaminyl-[protein] + H2O = L-glutamyl-[protein] + NH4(+). Its function is as follows. Involved in chemotaxis. Part of a chemotaxis signal transduction system that modulates chemotaxis in response to various stimuli. Catalyzes the demethylation of specific methylglutamate residues introduced into the chemoreceptors (methyl-accepting chemotaxis proteins or MCP) by CheR. Also mediates the irreversible deamidation of specific glutamine residues to glutamic acid. The protein is Protein-glutamate methylesterase/protein-glutamine glutaminase of Moorella thermoacetica (strain ATCC 39073 / JCM 9320).